We begin with the raw amino-acid sequence, 599 residues long: MPEKLLKITYQGAGPQKKINAYLRMPSQNYTILRREIELYLFQERQLPKCDVRTFWIDADQDEIEIVNQNDYEIFLAKCESNMHVQVAPLAPIEEPKATKQEGSSANAEAPSVDDPSNFTIHDSVQCDGCGLAPLIGFRYKCVQCSNFDLCQKCESAHKHPEHLMLRMPTNNGPGMVDAWFTGPGLGRRCGRRSRGHCPFQEASQPAPAAEPARDSRRERRHARRHAGVLSQFVEMMTNLPLNTTTATAPAEPQKPKAAEQTESPPQAEPTVTAEKATESEAKPTEPMKVNTDQSVPTTEDPVTTPRSTEPTTPVINLDNLSQIVPPEYMRAGIEILNNFSEMFSKMIDTTDVGDSGIFAPSTTSSAENKKPEEQSQSSGQSAASSASQSAVPSAAPSANQSNVPSANQSATPSISGSISDAQLETEPLNPKPLETTTETEQDRRRSDSLDPEWQLIDNAYSANNSNLINLDTTNPTAAPQQPVRDFGQLGELLRQHMNEEARVEQASANTQTAQVDTVSTSTSTTSVTTNSVGTSPAAPDDKRTVPVYHTDERINQSIHAMMAMGFSNEGAWLTQLLESVQGNIPAALDVMHVSQTRN.

The PB1 domain occupies Glu3–Ala88. The segment at His122–Gly173 adopts a ZZ-type zinc-finger fold. The Zn(2+) site is built by Cys127, Cys130, Cys142, Cys145, Cys151, Cys154, His160, and His163. Disordered regions lie at residues Arg192–Arg225, Thr245–Asp319, Gly357–Glu453, and Ala507–Arg544. Over residues Pro199–Glu211 the composition is skewed to low complexity. Basic and acidic residues predominate over residues Lys276–Glu286. Positions Asn291–Asp319 are enriched in polar residues. The span at Gln375–Ala411 shows a compositional bias: low complexity. Tandem repeats lie at residues Ser386 to Pro393, Ala399 to Ser406, and Ala407 to Pro413. Positions Ser386 to Pro413 are 3 X 8 AA repeats of S-A-N-Q-S-X-X-P. A compositionally biased stretch (polar residues) spans Thr412–Gln423. Low complexity predominate over residues Thr511 to Ser536. The 46-residue stretch at His550–Ser595 folds into the UBA domain.

Interacts with aPKC and Traf6.

It is found in the nucleus. It localises to the cytoplasm. In terms of biological role, required for selective autophagy activation by ubiquitinated proteins. Implicated in sigma rhabdovirus multiplication and necessary for male fertility. Involved in activating transcription of Drs. In Drosophila simulans (Fruit fly), this protein is Protein ref(2)P (ref(2)P).